Reading from the N-terminus, the 334-residue chain is Adenosine deaminase (334 aa).

Zn(2+) is bound by residues H12 and H14. The substrate site is built by H14, D16, and G170. Residue H197 coordinates Zn(2+). The Proton donor role is filled by E200. Residue D278 coordinates Zn(2+). D279 contributes to the substrate binding site.

The protein belongs to the metallo-dependent hydrolases superfamily. Adenosine and AMP deaminases family. Adenosine deaminase subfamily. The cofactor is Zn(2+).

It carries out the reaction adenosine + H2O + H(+) = inosine + NH4(+). The enzyme catalyses 2'-deoxyadenosine + H2O + H(+) = 2'-deoxyinosine + NH4(+). Its function is as follows. Catalyzes the hydrolytic deamination of adenosine and 2-deoxyadenosine. The chain is Adenosine deaminase from Vibrio parahaemolyticus serotype O3:K6 (strain RIMD 2210633).